We begin with the raw amino-acid sequence, 86 residues long: Stage V sporulation protein S (86 aa).

Interferes with sporulation at an early stage. Seems to play a positive role in allowing cells to progress beyond stage V of sporulation. The sequence is that of Stage V sporulation protein S from Bacillus subtilis (strain 168).